A 334-amino-acid polypeptide reads, in one-letter code: Fructose-1,6-bisphosphatase class 1 (334 aa).

4 residues coordinate Mg(2+): E90, D113, L115, and D116. Residues 116–119 (DGSS), N209, Y242, and K272 each bind substrate. E278 contacts Mg(2+).

This sequence belongs to the FBPase class 1 family. Homotetramer. Mg(2+) serves as cofactor.

The protein localises to the cytoplasm. It carries out the reaction beta-D-fructose 1,6-bisphosphate + H2O = beta-D-fructose 6-phosphate + phosphate. The protein operates within carbohydrate biosynthesis; gluconeogenesis. The protein is Fructose-1,6-bisphosphatase class 1 of Haemophilus ducreyi (strain 35000HP / ATCC 700724).